The sequence spans 487 residues: Glutamyl-tRNA(Gln) amidotransferase subunit A (487 aa).

Catalysis depends on charge relay system residues Lys-77 and Ser-152. Ser-176 serves as the catalytic Acyl-ester intermediate.

The protein belongs to the amidase family. GatA subfamily. In terms of assembly, heterotrimer of A, B and C subunits.

The catalysed reaction is L-glutamyl-tRNA(Gln) + L-glutamine + ATP + H2O = L-glutaminyl-tRNA(Gln) + L-glutamate + ADP + phosphate + H(+). Functionally, allows the formation of correctly charged Gln-tRNA(Gln) through the transamidation of misacylated Glu-tRNA(Gln) in organisms which lack glutaminyl-tRNA synthetase. The reaction takes place in the presence of glutamine and ATP through an activated gamma-phospho-Glu-tRNA(Gln). The sequence is that of Glutamyl-tRNA(Gln) amidotransferase subunit A from Lysinibacillus sphaericus (strain C3-41).